Here is a 456-residue protein sequence, read N- to C-terminus: Argininosuccinate lyase (456 aa).

Belongs to the lyase 1 family. Argininosuccinate lyase subfamily.

It is found in the cytoplasm. The enzyme catalyses 2-(N(omega)-L-arginino)succinate = fumarate + L-arginine. Its pathway is amino-acid biosynthesis; L-arginine biosynthesis; L-arginine from L-ornithine and carbamoyl phosphate: step 3/3. This is Argininosuccinate lyase from Listeria monocytogenes serovar 1/2a (strain ATCC BAA-679 / EGD-e).